Reading from the N-terminus, the 107-residue chain is Urease subunit beta (107 aa).

Belongs to the urease beta subunit family. In terms of assembly, heterotrimer of UreA (gamma), UreB (beta) and UreC (alpha) subunits. Three heterotrimers associate to form the active enzyme.

It localises to the cytoplasm. The catalysed reaction is urea + 2 H2O + H(+) = hydrogencarbonate + 2 NH4(+). Its pathway is nitrogen metabolism; urea degradation; CO(2) and NH(3) from urea (urease route): step 1/1. The polypeptide is Urease subunit beta (Teredinibacter turnerae (strain ATCC 39867 / T7901)).